Here is a 407-residue protein sequence, read N- to C-terminus: Protein COS9 (407 aa).

3 helical membrane passes run 75 to 95, 98 to 118, and 261 to 281; these read TWLL…IKSI, IFPF…LPNI, and IFNL…YVSW.

Belongs to the DUP/COS family.

It is found in the membrane. This Saccharomyces cerevisiae (strain ATCC 204508 / S288c) (Baker's yeast) protein is Protein COS9 (COS9).